The sequence spans 105 residues: Large ribosomal subunit protein uL24 (105 aa).

This sequence belongs to the universal ribosomal protein uL24 family. As to quaternary structure, part of the 50S ribosomal subunit.

Functionally, one of two assembly initiator proteins, it binds directly to the 5'-end of the 23S rRNA, where it nucleates assembly of the 50S subunit. One of the proteins that surrounds the polypeptide exit tunnel on the outside of the subunit. This is Large ribosomal subunit protein uL24 from Clostridium novyi (strain NT).